Here is a 394-residue protein sequence, read N- to C-terminus: Elongation factor Tu (394 aa).

Positions 10-204 (KPHINVGTIG…HLDNYIPEPK (195 aa)) constitute a tr-type G domain. A G1 region spans residues 19 to 26 (GHVDHGKT). A GTP-binding site is contributed by 19–26 (GHVDHGKT). Thr26 serves as a coordination point for Mg(2+). Residues 60 to 64 (GITIN) are G2. Residues 81–84 (DCPG) form a G3 region. GTP contacts are provided by residues 81–85 (DCPGH) and 136–139 (NKCD). Residues 136–139 (NKCD) are G4. The segment at 174-176 (SAL) is G5.

It belongs to the TRAFAC class translation factor GTPase superfamily. Classic translation factor GTPase family. EF-Tu/EF-1A subfamily. In terms of assembly, monomer.

Its subcellular location is the cytoplasm. The catalysed reaction is GTP + H2O = GDP + phosphate + H(+). Its function is as follows. GTP hydrolase that promotes the GTP-dependent binding of aminoacyl-tRNA to the A-site of ribosomes during protein biosynthesis. This chain is Elongation factor Tu, found in Wigglesworthia glossinidia brevipalpis.